Consider the following 89-residue polypeptide: Small ribosomal subunit protein bS18 (89 aa).

Belongs to the bacterial ribosomal protein bS18 family. As to quaternary structure, part of the 30S ribosomal subunit. Forms a tight heterodimer with protein bS6.

Functionally, binds as a heterodimer with protein bS6 to the central domain of the 16S rRNA, where it helps stabilize the platform of the 30S subunit. This chain is Small ribosomal subunit protein bS18, found in Treponema denticola (strain ATCC 35405 / DSM 14222 / CIP 103919 / JCM 8153 / KCTC 15104).